The sequence spans 316 residues: 4-hydroxy-3-methylbut-2-enyl diphosphate reductase (316 aa).

Residue C12 coordinates [4Fe-4S] cluster. 2 residues coordinate (2E)-4-hydroxy-3-methylbut-2-enyl diphosphate: H41 and H74. Dimethylallyl diphosphate contacts are provided by H41 and H74. Isopentenyl diphosphate-binding residues include H41 and H74. C96 contacts [4Fe-4S] cluster. H124 provides a ligand contact to (2E)-4-hydroxy-3-methylbut-2-enyl diphosphate. H124 contributes to the dimethylallyl diphosphate binding site. H124 is a binding site for isopentenyl diphosphate. The active-site Proton donor is E126. (2E)-4-hydroxy-3-methylbut-2-enyl diphosphate is bound at residue T167. Position 197 (C197) interacts with [4Fe-4S] cluster. (2E)-4-hydroxy-3-methylbut-2-enyl diphosphate contacts are provided by S225, S226, N227, and S269. The dimethylallyl diphosphate site is built by S225, S226, N227, and S269. Isopentenyl diphosphate-binding residues include S225, S226, N227, and S269.

This sequence belongs to the IspH family. Homodimer. [4Fe-4S] cluster is required as a cofactor.

It catalyses the reaction isopentenyl diphosphate + 2 oxidized [2Fe-2S]-[ferredoxin] + H2O = (2E)-4-hydroxy-3-methylbut-2-enyl diphosphate + 2 reduced [2Fe-2S]-[ferredoxin] + 2 H(+). The enzyme catalyses dimethylallyl diphosphate + 2 oxidized [2Fe-2S]-[ferredoxin] + H2O = (2E)-4-hydroxy-3-methylbut-2-enyl diphosphate + 2 reduced [2Fe-2S]-[ferredoxin] + 2 H(+). It participates in isoprenoid biosynthesis; dimethylallyl diphosphate biosynthesis; dimethylallyl diphosphate from (2E)-4-hydroxy-3-methylbutenyl diphosphate: step 1/1. The protein operates within isoprenoid biosynthesis; isopentenyl diphosphate biosynthesis via DXP pathway; isopentenyl diphosphate from 1-deoxy-D-xylulose 5-phosphate: step 6/6. Its function is as follows. Catalyzes the conversion of 1-hydroxy-2-methyl-2-(E)-butenyl 4-diphosphate (HMBPP) into a mixture of isopentenyl diphosphate (IPP) and dimethylallyl diphosphate (DMAPP). Acts in the terminal step of the DOXP/MEP pathway for isoprenoid precursor biosynthesis. This chain is 4-hydroxy-3-methylbut-2-enyl diphosphate reductase, found in Pectobacterium atrosepticum (strain SCRI 1043 / ATCC BAA-672) (Erwinia carotovora subsp. atroseptica).